The following is a 194-amino-acid chain: tRNA (guanine-N(1)-)-methyltransferase (194 aa).

S-adenosyl-L-methionine is bound by residues Gly78 and 97–102; that span reads IGDYVL.

The protein belongs to the RNA methyltransferase TrmD family. In terms of assembly, homodimer.

It localises to the cytoplasm. The catalysed reaction is guanosine(37) in tRNA + S-adenosyl-L-methionine = N(1)-methylguanosine(37) in tRNA + S-adenosyl-L-homocysteine + H(+). Functionally, specifically methylates guanosine-37 in various tRNAs. This Mycoplasma mobile (strain ATCC 43663 / 163K / NCTC 11711) (Mesomycoplasma mobile) protein is tRNA (guanine-N(1)-)-methyltransferase.